The primary structure comprises 333 residues: NADH-quinone oxidoreductase subunit H (333 aa).

Transmembrane regions (helical) follow at residues 15–35 (FFIFFGLAVLLLFAVLGFVTY), 88–108 (FILAPVIAFAPAFMVLAVIPF), 117–137 (IGVGLLYYIAVSGITTIGVVT), 159–179 (ISYEIPLVMSVIGIVLLAGSL), 191–211 (VWYIFVQPIGFVVFLIAAVAE), 239–259 (WAFFMLSEYVYFFGMASLITV), 274–296 (IPGAVWFALKFSSVVFLLIWFRV), and 313–333 (VLLPIALANIFLTALIKELFF).

Belongs to the complex I subunit 1 family. As to quaternary structure, NDH-1 is composed of 14 different subunits. Subunits NuoA, H, J, K, L, M, N constitute the membrane sector of the complex.

It is found in the cell membrane. The catalysed reaction is a quinone + NADH + 5 H(+)(in) = a quinol + NAD(+) + 4 H(+)(out). NDH-1 shuttles electrons from NADH, via FMN and iron-sulfur (Fe-S) centers, to quinones in the respiratory chain. The immediate electron acceptor for the enzyme in this species is believed to be ubiquinone. Couples the redox reaction to proton translocation (for every two electrons transferred, four hydrogen ions are translocated across the cytoplasmic membrane), and thus conserves the redox energy in a proton gradient. This subunit may bind ubiquinone. This chain is NADH-quinone oxidoreductase subunit H, found in Bacillus cereus (strain G9842).